We begin with the raw amino-acid sequence, 137 residues long: Putative pre-16S rRNA nuclease (137 aa).

The protein belongs to the YqgF nuclease family.

The protein localises to the cytoplasm. Its function is as follows. Could be a nuclease involved in processing of the 5'-end of pre-16S rRNA. This Clostridium botulinum (strain 657 / Type Ba4) protein is Putative pre-16S rRNA nuclease.